Consider the following 704-residue polypeptide: MDARHWPWFLVFATFLLVSGLPAPEKFVKDIDGGIDQDIFDINEDLGLDLFEGDIKLEASGRNSIIGDNYRWPHTIPYVLEDSLEMNAKGVILNAFERYRLKTCIDFKPWSGEENYISVFKGSGCWSSVGNIHAGKQELSIGTNCDRIATVQHEFLHALGFWHEQSRADRDDYITIVWDRILSGKEHNFNIYNDSVSDSLNVPYDYTSVMHYSKTAFQNGTESTIITKISDFEDVIGQRMDFSDYDLLKLNQLYSCTSSLSFMDSCDFELENICGMIQSSQDSADWQRLSQVLSGPENDHSNMGQCKDSGFFMHFNTSTGNGGVTAMLESRVLYPKRGFQCVEFYLYNSGSGNGQLNVYTREYTAGHQDGVLTLQREIRDIPTGSWQLYYVTLQVTEKFRVVFEGVGGPGASSGGLSIDDINLSETRCPHHIWHIQNFTQLLGGQTTVYSPPFYSSKGYAFQINLDLTSPTNVGLYFHLISGANDDQLQWPCPWQQATMTLLDQNPDIRQRMSNQRSITTDPKMTDDNGSYLWDRPSKVGVEAFFPNGTQFSRGRGYGTSVFITQERLKSREFLKGDDVYILLTVEDISHLNSTAAVPGPVPTTSTVHNACSEVECQNGGICTLQEGRAECKCPAGEDWWYMGKRCEKRGSTKDTIVIAVSSTVTVFAVMLIITLISVYCTRRKYRKKASAKTAAMNLENQHAF.

An N-terminal signal peptide occupies residues 1 to 20 (MDARHWPWFLVFATFLLVSG). Positions 21–64 (LPAPEKFVKDIDGGIDQDIFDINEDLGLDLFEGDIKLEASGRNS) are excised as a propeptide. Residues 21–654 (LPAPEKFVKD…RCEKRGSTKD (634 aa)) are Extracellular-facing. Positions 63-257 (NSIIGDNYRW…LKLNQLYSCT (195 aa)) constitute a Peptidase M12A domain. 3 cysteine pairs are disulfide-bonded: Cys104-Cys256, Cys125-Cys145, and Cys266-Cys428. Zn(2+) is bound at residue His153. Residue Glu154 is part of the active site. Positions 157 and 163 each coordinate Zn(2+). 8 N-linked (GlcNAc...) asparagine glycosylation sites follow: Asn193, Asn219, Asn316, Asn422, Asn437, Asn528, Asn547, and Asn592. The region spanning 261-430 (SFMDSCDFEL…INLSETRCPH (170 aa)) is the MAM domain. The 155-residue stretch at 431–585 (HIWHIQNFTQ…GDDVYILLTV (155 aa)) folds into the MATH domain. The EGF-like domain occupies 607 to 647 (VHNACSEVECQNGGICTLQEGRAECKCPAGEDWWYMGKRCE). Intrachain disulfides connect Cys611/Cys622, Cys616/Cys631, and Cys633/Cys646. The helical transmembrane segment at 655–678 (TIVIAVSSTVTVFAVMLIITLISV) threads the bilayer. The Cytoplasmic portion of the chain corresponds to 679 to 704 (YCTRRKYRKKASAKTAAMNLENQHAF). Thr693 is subject to Phosphothreonine.

As to quaternary structure, homotetramer consisting of disulfide-linked beta subunits, or heterotetramer of two alpha and two beta subunits formed by non-covalent association of two disulfide-linked heterodimers. Interacts with MBL2 through its carbohydrate moiety. This interaction may inhibit its catalytic activity. Interacts with TSPAN8. It depends on Zn(2+) as a cofactor. Post-translationally, N-glycosylated; contains high mannose and/or complex biantennary structures. In terms of processing, proteolytically activated by trypsin in the intestinal lumen and kallikrein-related peptidases in other tissues. Phosphorylated by PKC at multiple sites of its cytoplasmic part. Phosphorylation dcreases activity at the cell surface, leading to diminished substrate cleavage. As to expression, kidney, intestinal brush borders and salivary ducts.

The protein localises to the cell membrane. The protein resides in the secreted. The catalysed reaction is Hydrolysis of proteins, including azocasein, and peptides. Hydrolysis of 5-His-|-Leu-6, 6-Leu-|-Cys-7, 14-Ala-|-Leu-15 and 19-Cys-|-Gly-20 bonds in insulin B chain.. Strongly inhibited by fetuin-A/AHSG. In terms of biological role, membrane metallopeptidase that sheds many membrane-bound proteins. Exhibits a strong preference for acidic amino acids at the P1' position. Known substrates include: FGF19, VGFA, IL1B, IL18, procollagen I and III, E-cadherin, KLK7, gastrin, ADAM10, tenascin-C. The presence of several pro-inflammatory cytokine among substrates implicate MEP1B in inflammation. It is also involved in tissue remodeling due to its capability to degrade extracellular matrix components. The protein is Meprin A subunit beta (Mep1b) of Rattus norvegicus (Rat).